A 462-amino-acid polypeptide reads, in one-letter code: Protoheme IX farnesyltransferase, mitochondrial (462 aa).

7 helical membrane passes run 152-172 (LTILVTLSSICSYAISPYTVS), 173-193 (LPELLFLTMGTALCSGAANAI), 237-257 (MLFLGVNPTVSFLGFLNIVLY), 269-289 (IINTWVGAIVGAIPPLMGWAA), 296-316 (PGAWCLAGLLYAWQFPHFNAL), 348-368 (SLLMFPLCFGLSYFGITDWVF), and 411-431 (AKKLFWGSVWHLPAVLILAML).

Belongs to the UbiA prenyltransferase family.

It is found in the mitochondrion membrane. Functionally, converts protoheme IX and farnesyl diphosphate to heme O. In Debaryomyces hansenii (strain ATCC 36239 / CBS 767 / BCRC 21394 / JCM 1990 / NBRC 0083 / IGC 2968) (Yeast), this protein is Protoheme IX farnesyltransferase, mitochondrial (COX10).